Here is a 341-residue protein sequence, read N- to C-terminus: Heat-inducible transcription repressor HrcA (341 aa).

Belongs to the HrcA family.

In terms of biological role, negative regulator of class I heat shock genes (grpE-dnaK-dnaJ and groELS operons). Prevents heat-shock induction of these operons. This chain is Heat-inducible transcription repressor HrcA, found in Brevibacillus brevis (strain 47 / JCM 6285 / NBRC 100599).